The primary structure comprises 20 residues: Toxin CpTx-4a (20 aa).

The protein belongs to the spider toxin CSTX family. Expressed by the venom gland.

It is found in the secreted. Its function is as follows. Spider venom toxin that exhibits cytolytic activity by forming an alpha-helix across the membrane. Lethal to insect larvae. This Cheiracanthium punctorium (Yellow sac spider) protein is Toxin CpTx-4a.